Consider the following 363-residue polypeptide: tRNA (guanine(26)-N(2))-dimethyltransferase (363 aa).

A Trm1 methyltransferase domain is found at 5 to 352 (VLRREGGVKF…GEYGEVLMAF (348 aa)). S-adenosyl-L-methionine is bound by residues R40, R67, D85, D111, and A112.

Belongs to the class I-like SAM-binding methyltransferase superfamily. Trm1 family.

It carries out the reaction guanosine(26) in tRNA + 2 S-adenosyl-L-methionine = N(2)-dimethylguanosine(26) in tRNA + 2 S-adenosyl-L-homocysteine + 2 H(+). Dimethylates a single guanine residue at position 26 of a number of tRNAs using S-adenosyl-L-methionine as donor of the methyl groups. This is tRNA (guanine(26)-N(2))-dimethyltransferase from Pyrobaculum aerophilum (strain ATCC 51768 / DSM 7523 / JCM 9630 / CIP 104966 / NBRC 100827 / IM2).